The sequence spans 1171 residues: ATP-dependent helicase/deoxyribonuclease subunit B (1171 aa).

The UvrD-like helicase ATP-binding domain occupies 1–390 (MSLRFVIGRA…HPLVECIRSA (390 aa)). 8 to 15 (GRAGSGKS) is an ATP binding site. Residues 281–587 (MEQPRFHSPA…QFANIPPSLD (307 aa)) enclose the UvrD-like helicase C-terminal domain. 4 residues coordinate [4Fe-4S] cluster: Cys805, Cys1129, Cys1132, and Cys1138.

It belongs to the helicase family. AddB/RexB type 1 subfamily. As to quaternary structure, heterodimer of AddA and AddB. Mg(2+) is required as a cofactor. [4Fe-4S] cluster serves as cofactor.

In terms of biological role, the heterodimer acts as both an ATP-dependent DNA helicase and an ATP-dependent, dual-direction single-stranded exonuclease. Recognizes the chi site generating a DNA molecule suitable for the initiation of homologous recombination. The AddB subunit has 5' -&gt; 3' nuclease activity but not helicase activity. The chain is ATP-dependent helicase/deoxyribonuclease subunit B from Bacillus cereus (strain ATCC 10987 / NRS 248).